The chain runs to 318 residues: Gamma-glutamyl hydrolase (318 aa).

An N-terminal signal peptide occupies residues 1-24 (MASPGCLLCVLGLLLCGAASLELS). Residues 25-318 (RPHGDTAKKP…SSFQQCYIFD (294 aa)) form the Gamma-glutamyl hydrolase domain. N-linked (GlcNAc...) asparagine glycosylation occurs at asparagine 116. The active-site Nucleophile is the cysteine 134. N-linked (GlcNAc...) asparagine glycans are attached at residues asparagine 163 and asparagine 203. Histidine 244 serves as the catalytic Proton donor. Asparagine 307 carries an N-linked (GlcNAc...) asparagine; partial glycan.

This sequence belongs to the peptidase C26 family. In terms of assembly, homodimer.

It is found in the secreted. The protein localises to the extracellular space. The protein resides in the lysosome. Its subcellular location is the melanosome. It carries out the reaction (6S)-5,6,7,8-tetrahydrofolyl-(gamma-L-Glu)(n) + (n-1) H2O = (6S)-5,6,7,8-tetrahydrofolate + (n-1) L-glutamate. Its function is as follows. Hydrolyzes the polyglutamate sidechains of pteroylpolyglutamates. Progressively removes gamma-glutamyl residues from pteroylpoly-gamma-glutamate to yield pteroyl-alpha-glutamate (folic acid) and free glutamate. May play an important role in the bioavailability of dietary pteroylpolyglutamates and in the metabolism of pteroylpolyglutamates and antifolates. The sequence is that of Gamma-glutamyl hydrolase from Homo sapiens (Human).